We begin with the raw amino-acid sequence, 1137 residues long: DNA-directed RNA polymerase III subunit RPC2 (1137 aa).

Residues 1084–1099 (DVCRTCGRMAYCSWCH) form a C4-type zinc finger. Zn(2+)-binding residues include C1086, C1089, C1098, and C1101.

Belongs to the RNA polymerase beta chain family. In terms of assembly, component of the RNA polymerase III (Pol III) complex consisting of 17 subunits.

It localises to the nucleus. The enzyme catalyses RNA(n) + a ribonucleoside 5'-triphosphate = RNA(n+1) + diphosphate. DNA-dependent RNA polymerase catalyzes the transcription of DNA into RNA using the four ribonucleoside triphosphates as substrates. Second largest core component of RNA polymerase III which synthesizes small RNAs, such as 5S rRNA and tRNAs. Proposed to contribute to the polymerase catalytic activity and forms the polymerase active center together with the largest subunit. Pol III is composed of mobile elements and Polr3B is part of the core element with the central large cleft and probably a clamp element that moves to open and close the cleft. This Drosophila melanogaster (Fruit fly) protein is DNA-directed RNA polymerase III subunit RPC2.